Consider the following 237-residue polypeptide: Large ribosomal subunit protein uL1 (237 aa).

This sequence belongs to the universal ribosomal protein uL1 family. Part of the 50S ribosomal subunit.

Its function is as follows. Binds directly to 23S rRNA. The L1 stalk is quite mobile in the ribosome, and is involved in E site tRNA release. Protein L1 is also a translational repressor protein, it controls the translation of the L11 operon by binding to its mRNA. The chain is Large ribosomal subunit protein uL1 from Chloroflexus aggregans (strain MD-66 / DSM 9485).